The chain runs to 376 residues: Queuine tRNA-ribosyltransferase (376 aa).

The Proton acceptor role is filled by Asp-93. Substrate is bound by residues 93–97, Asp-147, Gln-190, and Gly-217; that span reads DSGGF. The tract at residues 248 to 254 is RNA binding; sequence GVGTPDD. The Nucleophile role is filled by Asp-267. An RNA binding; important for wobble base 34 recognition region spans residues 272 to 276; sequence TRAGR.

The protein belongs to the queuine tRNA-ribosyltransferase family. As to quaternary structure, homodimer. Within each dimer, one monomer is responsible for RNA recognition and catalysis, while the other monomer binds to the replacement base PreQ1.

It catalyses the reaction 7-aminomethyl-7-carbaguanine + guanosine(34) in tRNA = 7-aminomethyl-7-carbaguanosine(34) in tRNA + guanine. Its pathway is tRNA modification; tRNA-queuosine biosynthesis. Functionally, catalyzes the base-exchange of a guanine (G) residue with the queuine precursor 7-aminomethyl-7-deazaguanine (PreQ1) at position 34 (anticodon wobble position) in tRNAs with GU(N) anticodons (tRNA-Asp, -Asn, -His and -Tyr). Catalysis occurs through a double-displacement mechanism. The nucleophile active site attacks the C1' of nucleotide 34 to detach the guanine base from the RNA, forming a covalent enzyme-RNA intermediate. The proton acceptor active site deprotonates the incoming PreQ1, allowing a nucleophilic attack on the C1' of the ribose to form the product. After dissociation, two additional enzymatic reactions on the tRNA convert PreQ1 to queuine (Q), resulting in the hypermodified nucleoside queuosine (7-(((4,5-cis-dihydroxy-2-cyclopenten-1-yl)amino)methyl)-7-deazaguanosine). The protein is Queuine tRNA-ribosyltransferase of Mesorhizobium japonicum (strain LMG 29417 / CECT 9101 / MAFF 303099) (Mesorhizobium loti (strain MAFF 303099)).